We begin with the raw amino-acid sequence, 349 residues long: tRNA pseudouridine synthase D (349 aa).

The interval 1–22 (MTDAPLVTAELPGSGGSLRRSP) is disordered. Asp-78 (nucleophile) is an active-site residue. One can recognise a TRUD domain in the interval 150-304 (GLPNLFGPQR…AEGTRRAARL (155 aa)).

The protein belongs to the pseudouridine synthase TruD family.

It carries out the reaction uridine(13) in tRNA = pseudouridine(13) in tRNA. In terms of biological role, responsible for synthesis of pseudouridine from uracil-13 in transfer RNAs. In Anaeromyxobacter sp. (strain Fw109-5), this protein is tRNA pseudouridine synthase D.